Reading from the N-terminus, the 205-residue chain is Ribonuclease HII (205 aa).

An RNase H type-2 domain is found at 1-203 (MKAGIDEAGK…VSNLRQKTLD (203 aa)). A divalent metal cation is bound by residues Asp-6 and Glu-7. Arg-46 is a binding site for substrate. Asp-101 serves as a coordination point for a divalent metal cation. Positions 143, 146, and 164 each coordinate substrate.

Belongs to the RNase HII family. It depends on Mn(2+) as a cofactor. Mg(2+) is required as a cofactor.

It localises to the cytoplasm. The catalysed reaction is Endonucleolytic cleavage to 5'-phosphomonoester.. In terms of biological role, endonuclease that specifically degrades the RNA of RNA-DNA hybrids. This is Ribonuclease HII (rnhB) from Archaeoglobus fulgidus (strain ATCC 49558 / DSM 4304 / JCM 9628 / NBRC 100126 / VC-16).